A 590-amino-acid chain; its full sequence is Protein Spindly (590 aa).

Residues 1 to 401 adopt a coiled-coil conformation; the sequence is MSDLEDEIKV…SMARMKALSE (401 aa). A disordered region spans residues 446-590; it reads NKAQVQKRRR…KTMANECAQQ (145 aa). Basic and acidic residues-rich tracts occupy residues 483-497 and 518-527; these read SNEK…HPVE and RESKSVRICE. Composition is skewed to polar residues over residues 541–554 and 572–590; these read VNDS…QTHQ and QQPT…CAQQ.

The protein belongs to the Spindly family.

The protein resides in the chromosome. The protein localises to the centromere. It localises to the kinetochore. Required for the localization of dynein and dynactin to the mitotic kintochore. Dynein is believed to control the initial lateral interaction between the kinetochore and spindle microtubules and to facilitate the subsequent formation of end-on kinetochore-microtubule attachments mediated by the NDC80 complex. May act as an adapter protein linking the dynein motor complex to various cargos. This is Protein Spindly (spdl1) from Danio rerio (Zebrafish).